The chain runs to 277 residues: Pristinamycin IIA synthase subunit B (277 aa).

Heterodimer of two subunits, SnaA and SnaB. FMN is required as a cofactor.

Functionally, catalyzes the oxidation of the proline residue of pristinamycin IIB (PIIB) to pristinamycin IIA (PIIA). This is Pristinamycin IIA synthase subunit B (snaB) from Streptomyces pristinaespiralis.